We begin with the raw amino-acid sequence, 444 residues long: NAD-capped RNA hydrolase NUDT12 (444 aa).

ANK repeat units follow at residues glutamate 11–asparagine 40 and serine 60–leucine 80. Lysine 167 carries the N6-succinyllysine modification. Zn(2+)-binding residues include cysteine 266 and cysteine 269. Lysine 274 is subject to N6-succinyllysine. Residues cysteine 284 and cysteine 289 each contribute to the Zn(2+) site. Substrate is bound by residues tyrosine 300, alanine 336 to phenylalanine 338, glutamate 352, glutamate 356, and glutamate 397. Residues proline 301–lysine 435 form the Nudix hydrolase domain. The Mg(2+) site is built by alanine 336, glutamate 352, glutamate 356, and glutamate 397. The Nudix box signature appears at glycine 337–glycine 358. The short motif at proline 442–leucine 444 is the Microbody targeting signal element.

This sequence belongs to the Nudix hydrolase family. NudC subfamily. In terms of assembly, homodimer. Homodimerization is essential for its catalytic activity and protein stability. Interacts (via ANK repeats) with BLMH. It depends on Mg(2+) as a cofactor. Zn(2+) serves as cofactor.

It localises to the cytoplasm. It is found in the peroxisome. The protein resides in the cytoplasmic granule. The catalysed reaction is a 5'-end NAD(+)-phospho-ribonucleoside in mRNA + H2O = a 5'-end phospho-adenosine-phospho-ribonucleoside in mRNA + beta-nicotinamide D-ribonucleotide + 2 H(+). The enzyme catalyses NAD(+) + H2O = beta-nicotinamide D-ribonucleotide + AMP + 2 H(+). It catalyses the reaction NADH + H2O = reduced beta-nicotinamide D-ribonucleotide + AMP + 2 H(+). It carries out the reaction NADPH + H2O = reduced beta-nicotinamide D-ribonucleotide + adenosine 2',5'-bisphosphate + 2 H(+). Its function is as follows. mRNA decapping enzyme that specifically removes the nicotinamide adenine dinucleotide (NAD) cap from a subset of mRNAs by hydrolyzing the diphosphate linkage to produce nicotinamide mononucleotide (NMN) and 5' monophosphate mRNA. The NAD-cap is present at the 5'-end of some RNAs; in contrast to the canonical N7 methylguanosine (m7G) cap, the NAD cap promotes mRNA decay. Preferentially acts on NAD-capped transcripts in response to nutrient stress. Also acts on free nicotinamide adenine dinucleotide molecules: hydrolyzes NAD(H) into NMN(H) and AMP, and NADPH into NMNH and 2',5'-ADP. May act to regulate the concentration of peroxisomal nicotinamide nucleotide cofactors required for oxidative metabolism in this organelle. Regulates the levels of circadian clock components PER1, PER2, PER3 and CRY2 in the liver. This is NAD-capped RNA hydrolase NUDT12 from Bos taurus (Bovine).